Consider the following 341-residue polypeptide: Protein arginine N-methyltransferase 1 (341 aa).

The region spanning 20 to 315 is the SAM-dependent MTase PRMT-type domain; sequence ADYYFDSYSH…DCAPFDKNQR (296 aa). The S-adenosyl-L-methionine site is built by H33, R42, G66, D88, and E117. Catalysis depends on residues E132 and E141.

The protein belongs to the class I-like SAM-binding methyltransferase superfamily. Protein arginine N-methyltransferase family.

It localises to the nucleus. It is found in the cytoplasm. The protein localises to the cytosol. It carries out the reaction L-arginyl-[protein] + 2 S-adenosyl-L-methionine = N(omega),N(omega)-dimethyl-L-arginyl-[protein] + 2 S-adenosyl-L-homocysteine + 2 H(+). The enzyme catalyses L-arginyl-[protein] + S-adenosyl-L-methionine = N(omega)-methyl-L-arginyl-[protein] + S-adenosyl-L-homocysteine + H(+). In terms of biological role, arginine methyltransferase that methylates the guanidino nitrogens of arginyl residues present in proteins such as ribonucleoproteins and histones. In Dictyostelium discoideum (Social amoeba), this protein is Protein arginine N-methyltransferase 1 (prmt1).